A 388-amino-acid polypeptide reads, in one-letter code: Phosphopentomutase (388 aa).

Mn(2+)-binding residues include aspartate 10, aspartate 282, histidine 287, aspartate 323, histidine 324, and histidine 335.

The protein belongs to the phosphopentomutase family. Requires Mn(2+) as cofactor.

The protein localises to the cytoplasm. The catalysed reaction is 2-deoxy-alpha-D-ribose 1-phosphate = 2-deoxy-D-ribose 5-phosphate. It catalyses the reaction alpha-D-ribose 1-phosphate = D-ribose 5-phosphate. It functions in the pathway carbohydrate degradation; 2-deoxy-D-ribose 1-phosphate degradation; D-glyceraldehyde 3-phosphate and acetaldehyde from 2-deoxy-alpha-D-ribose 1-phosphate: step 1/2. Functionally, isomerase that catalyzes the conversion of deoxy-ribose 1-phosphate (dRib-1-P) and ribose 1-phosphate (Rib-1-P) to deoxy-ribose 5-phosphate (dRib-5-P) and ribose 5-phosphate (Rib-5-P), respectively. This is Phosphopentomutase from Desulfitobacterium hafniense (strain DSM 10664 / DCB-2).